The chain runs to 273 residues: Diadenylate cyclase (273 aa).

3 helical membrane passes run 12–32 (LANI…IMLI), 37–57 (AVQL…SGFF), and 61–81 (TVEW…IIIF). Residues 82 to 242 (QPELRRALET…GGELFRDVSE (161 aa)) enclose the DAC domain.

Belongs to the adenylate cyclase family. DacA/CdaA subfamily. Probably a homodimer.

Its subcellular location is the cell membrane. It catalyses the reaction 2 ATP = 3',3'-c-di-AMP + 2 diphosphate. Its function is as follows. Catalyzes the condensation of 2 ATP molecules into cyclic di-AMP (c-di-AMP), a signaling compound secreted into the host's cytosol where it triggers the cytosolic surveillance pathway (CSP), a host pathway of innate immunity characterized by expression of beta interferon (IFN-beta) and coregulated genes. Overexpression increases export of c-di-AMP. c-di-AMP is a second messenger that mediates growth, cell wall stability and virulence. The sequence is that of Diadenylate cyclase from Listeria monocytogenes serotype 1/2a (strain 10403S).